The chain runs to 274 residues: Endonuclease 8-like L720 (274 aa).

The segment at 241–274 (RIYRKSLCPLGHKTIRKKIGLRNRMTTWCPVCQL) adopts an FPG-type; degenerate zinc-finger fold.

It belongs to the FPG family.

This chain is Endonuclease 8-like L720, found in Acanthamoeba polyphaga mimivirus (APMV).